The chain runs to 700 residues: Probable pre-mRNA-splicing factor ATP-dependent RNA helicase DEAH4 (700 aa).

Ala2 bears the N-acetylalanine mark. The Helicase ATP-binding domain maps to 14 to 178 (VETVEKNSVV…FSGCPVLNVP (165 aa)). Residue 27–34 (GETGSGKS) coordinates ATP. A DEAH box motif is present at residues 124-127 (DEAH). In terms of domain architecture, Helicase C-terminal spans 200-377 (SLKVAIDIHV…GSVLYLKSLD (178 aa)). Disordered regions lie at residues 463 to 486 (PARS…NGSG) and 654 to 682 (GPAP…SENV).

Belongs to the DEAD box helicase family. DEAH subfamily. PRP22 sub-subfamily.

The enzyme catalyses ATP + H2O = ADP + phosphate + H(+). In terms of biological role, may be involved in pre-mRNA splicing. The sequence is that of Probable pre-mRNA-splicing factor ATP-dependent RNA helicase DEAH4 from Arabidopsis thaliana (Mouse-ear cress).